Here is a 486-residue protein sequence, read N- to C-terminus: 3-dehydroshikimate dehydratase (486 aa).

The enzyme catalyses 3-dehydroshikimate = 3,4-dihydroxybenzoate + H2O. Its pathway is aromatic compound metabolism; 3,4-dihydroxybenzoate biosynthesis; 3,4-dihydroxybenzoate from 3-dehydroquinate: step 2/2. Functionally, converts dehydroshikimate to protocatechuate. This is 3-dehydroshikimate dehydratase (quiC) from Acinetobacter baylyi (strain ATCC 33305 / BD413 / ADP1).